The primary structure comprises 208 residues: Cytochrome c biogenesis ATP-binding export protein CcmA (208 aa).

In terms of domain architecture, ABC transporter spans 3–206 (LSGKDLTAYR…LEKFLPPQEK (204 aa)). 35–42 (GPNGIGKS) serves as a coordination point for ATP.

The protein belongs to the ABC transporter superfamily. CcmA exporter (TC 3.A.1.107) family. In terms of assembly, the complex is composed of two ATP-binding proteins (CcmA) and two transmembrane proteins (CcmB).

Its subcellular location is the cell inner membrane. It carries out the reaction heme b(in) + ATP + H2O = heme b(out) + ADP + phosphate + H(+). Functionally, part of the ABC transporter complex CcmAB involved in the biogenesis of c-type cytochromes; once thought to export heme, this seems not to be the case, but its exact role is uncertain. Responsible for energy coupling to the transport system. The sequence is that of Cytochrome c biogenesis ATP-binding export protein CcmA from Bartonella henselae (strain ATCC 49882 / DSM 28221 / CCUG 30454 / Houston 1) (Rochalimaea henselae).